Here is an 828-residue protein sequence, read N- to C-terminus: MKLSRRSFMKANAVAAAAAAAGLSVPGVARAVVGQQEAIKWDKAPCRFCGTGCGVLVGTQQGRVVACQGDPDAPVNRGLNCIKGYFLPKIMYGKDRLTQPLLRMKNGKYDKEGEFTPITWDQAFDVMEEKFKTALKEKGPESIGMFGSGQWTIWEGYAASKLFKAGFRSNNIDPNARHCMASAVVGFMRTFGMDEPMGCYDDIEQADAFVLWGSNMAEMHPILWSRITNRRLSNQNVTVAVLSTYQHRSFELADNGIIFTPQSDLVILNYIANYIIQNNAINQDFFSKHVNLRKGATDIGYGLRPTHPLEKAAKNPGSDASEPMSFEDYKAFVAEYTLEKTAEMTGVPKDQLEQLAQLYADPNKKVISYWTMGFNQHTRGVWANNLVYNLHLLTGKISQPGCGPFSLTGQPSACGTAREVGTFAHRLPADMVVTNEKHRDICEKKWNIPSGTIPAKIGLHAVAQDRALKDGKLNVYWTMCTNNMQAGPNINEERMPGWRDPRNFIIVSDPYPTVSALAADLILPTAMWVEKEGAYGNAERRTQFWRQQVQAPGEAKSDLWQLVQFSRRFKTEEVWPEELLAKKPELRGKTLYEVLYATPEVSKFPLSELAEDQLNDESHELGFYLQKGLFEEYAWFGRGHGHDLAPFDDYHKARGLRWPVVNGKETQWRYSEGNDPYVKAGEGYKFYGKPDGKAVIFALPFEPAAEAPDEEYDLWLSTGRVLEHWHTGSMTRRVPELHRAFPEAVLFIHPLDAKARDLRRGDKVKVVSRRGEVISIVETRGRNRPPQGLVYMPFFDAAQLVNKLTLDATDPLSKETDFKKCAVKLEKV.

Residues 1 to 31 (MKLSRRSFMKANAVAAAAAAAGLSVPGVARA) constitute a signal peptide (tat-type signal). In terms of domain architecture, 4Fe-4S Mo/W bis-MGD-type spans 39–95 (IKWDKAPCRFCGTGCGVLVGTQQGRVVACQGDPDAPVNRGLNCIKGYFLPKIMYGKD). The [4Fe-4S] cluster site is built by C46, C49, C53, and C81. Mo-bis(molybdopterin guanine dinucleotide)-binding positions include K83, Q150, N175, C179, 212 to 219 (WGSNMAEM), 243 to 247 (STYQH), 262 to 264 (QSD), M372, Q376, N482, 508 to 509 (SD), K531, D558, and 718 to 727 (TGRVLEHWHT). F794 lines the substrate pocket. N802 and K819 together coordinate Mo-bis(molybdopterin guanine dinucleotide).

The protein belongs to the prokaryotic molybdopterin-containing oxidoreductase family. NasA/NapA/NarB subfamily. As to quaternary structure, component of the periplasmic nitrate reductase NapAB complex composed of NapA and NapB. It depends on [4Fe-4S] cluster as a cofactor. Mo-bis(molybdopterin guanine dinucleotide) is required as a cofactor. In terms of processing, predicted to be exported by the Tat system. The position of the signal peptide cleavage has not been experimentally proven.

The protein resides in the periplasm. The catalysed reaction is 2 Fe(II)-[cytochrome] + nitrate + 2 H(+) = 2 Fe(III)-[cytochrome] + nitrite + H2O. Catalytic subunit of the periplasmic nitrate reductase complex NapAB. Receives electrons from NapB and catalyzes the reduction of nitrate to nitrite. The sequence is that of Periplasmic nitrate reductase from Escherichia coli O127:H6 (strain E2348/69 / EPEC).